Reading from the N-terminus, the 311-residue chain is Methionyl-tRNA formyltransferase (311 aa).

110–113 is a binding site for (6S)-5,6,7,8-tetrahydrofolate; the sequence is SLLP.

The protein belongs to the Fmt family.

It carries out the reaction L-methionyl-tRNA(fMet) + (6R)-10-formyltetrahydrofolate = N-formyl-L-methionyl-tRNA(fMet) + (6S)-5,6,7,8-tetrahydrofolate + H(+). Its function is as follows. Attaches a formyl group to the free amino group of methionyl-tRNA(fMet). The formyl group appears to play a dual role in the initiator identity of N-formylmethionyl-tRNA by promoting its recognition by IF2 and preventing the misappropriation of this tRNA by the elongation apparatus. This is Methionyl-tRNA formyltransferase from Streptococcus pneumoniae (strain JJA).